The sequence spans 388 residues: Acyl-CoA dehydrogenase fadE12 (388 aa).

Belongs to the acyl-CoA dehydrogenase family. FAD is required as a cofactor.

It catalyses the reaction a 2,3-saturated acyl-CoA + A = a 2,3-dehydroacyl-CoA + AH2. The sequence is that of Acyl-CoA dehydrogenase fadE12 (fadE12) from Mycobacterium bovis (strain ATCC BAA-935 / AF2122/97).